The primary structure comprises 296 residues: Giardin subunit alpha-3 (296 aa).

Annexin repeat units follow at residues 3–72 (DTVT…SNCW), 74–146 (ELPV…TWIK), 153–222 (NNIN…TAHY), and 226–295 (GMNN…VLWR).

This sequence belongs to the annexin family. Giardin subunit alpha subfamily.

It localises to the cytoplasm. Its subcellular location is the cytoskeleton. In terms of biological role, giardins are involved in parasite attachment to the intestinal mucosa and in the cytoskeletal disassembly and reassembly that marks the transition from infectious trophozoite to transmissible cyst. They may interact with other cytoskeletal proteins such as microtubules in the microribbons or crossbridges, to maintain the integrity of the ventral disk. The protein is Giardin subunit alpha-3 of Giardia intestinalis (Giardia lamblia).